A 736-amino-acid polypeptide reads, in one-letter code: Zinc finger CCCH domain-containing protein 14 (736 aa).

An N-acetylmethionine modification is found at methionine 1. A compositionally biased stretch (polar residues) spans threonine 77–serine 103. The segment at threonine 77–threonine 153 is disordered. Serine 85 is subject to Phosphoserine. Glycyl lysine isopeptide (Lys-Gly) (interchain with G-Cter in SUMO2) cross-links involve residues lysine 99, lysine 139, lysine 175, and lysine 198. The span at arginine 123 to aspartate 148 shows a compositional bias: basic and acidic residues. Residue serine 240 is modified to Phosphoserine. Glycyl lysine isopeptide (Lys-Gly) (interchain with G-Cter in SUMO2) cross-links involve residues lysine 245, lysine 283, and lysine 295. Residues phenylalanine 308 to alanine 350 form a disordered region. Phosphoserine is present on residues serine 309, serine 327, and serine 343. Lysine 357 is subject to N6-acetyllysine; alternate. Residue lysine 357 forms a Glycyl lysine isopeptide (Lys-Gly) (interchain with G-Cter in SUMO2); alternate linkage. A compositionally biased stretch (polar residues) spans threonine 367–threonine 380. The interval threonine 367–arginine 386 is disordered. Lysine 378 participates in a covalent cross-link: Glycyl lysine isopeptide (Lys-Gly) (interchain with G-Cter in SUMO2). Phosphoserine occurs at positions 390 and 409. The disordered stretch occupies residues glutamine 400–aspartate 420. Glycyl lysine isopeptide (Lys-Gly) (interchain with G-Cter in SUMO2) cross-links involve residues lysine 413 and lysine 489. A phosphoserine mark is found at serine 498, serine 515, serine 527, and serine 620. C3H1-type zinc fingers lie at residues glutamate 595 to serine 620, proline 621 to asparagine 640, cysteine 641 to histidine 656, cysteine 682 to lysine 699, and cysteine 701 to isoleucine 719.

It belongs to the ZC3H14 family. As to quaternary structure, homodimer; facilitating circular RNAs (circRNAs) formation. Associates with the spliceosome. Interacts with HOOK2. Interacts with ZFC3H1 in a RNase-sensitive manner.

Its subcellular location is the nucleus speckle. RNA-binding protein involved in the biogenesis of circular RNAs (circRNAs), which are produced by back-splicing circularization of pre-mRNAs. Acts by binding to both exon-intron boundary and 3'-UTR of pre-mRNAs to promote circRNA biogenesis through dimerization and the association with the spliceosome. Required for spermatogenesis via involvement in circRNA biogenesis. Regulates the pre-mRNA processing of ATP5MC1; preventing its degradation. Also binds the poly(A) tail of mRNAs; controlling poly(A) length in neuronal cells. The chain is Zinc finger CCCH domain-containing protein 14 from Rattus norvegicus (Rat).